The following is a 294-amino-acid chain: Acetaldehyde dehydrogenase (294 aa).

11-14 serves as a coordination point for NAD(+); that stretch reads SGNI. Catalysis depends on Cys126, which acts as the Acyl-thioester intermediate. Residues 157-165 and Asn269 each bind NAD(+); that span reads SAGPGTRAN.

It belongs to the acetaldehyde dehydrogenase family.

It carries out the reaction acetaldehyde + NAD(+) + CoA = acetyl-CoA + NADH + H(+). The protein is Acetaldehyde dehydrogenase (pheF) of Geobacillus stearothermophilus (Bacillus stearothermophilus).